The chain runs to 1208 residues: DNA-directed RNA polymerase subunit beta (1208 aa).

The disordered stretch occupies residues 1182-1208; the sequence is EKKAAEQVEDEKDDVIQNFETAEDNLD.

Belongs to the RNA polymerase beta chain family. The RNAP catalytic core consists of 2 alpha, 1 beta, 1 beta' and 1 omega subunit. When a sigma factor is associated with the core the holoenzyme is formed, which can initiate transcription.

It catalyses the reaction RNA(n) + a ribonucleoside 5'-triphosphate = RNA(n+1) + diphosphate. In terms of biological role, DNA-dependent RNA polymerase catalyzes the transcription of DNA into RNA using the four ribonucleoside triphosphates as substrates. This chain is DNA-directed RNA polymerase subunit beta, found in Enterococcus faecium (Streptococcus faecium).